A 239-amino-acid chain; its full sequence is Transcriptional regulatory protein BtsR (239 aa).

Residues 3 to 116 (KVLIVDDEPL…RLEKTLHRLR (114 aa)) enclose the Response regulatory domain. D54 carries the post-translational modification 4-aspartylphosphate. The region spanning 137–239 (IPCTGHSRIY…LKSLKEAIGL (103 aa)) is the HTH LytTR-type domain.

Phosphorylated by BtsS.

Member of the two-component regulatory system BtsS/BtsR. BtsR regulates expression of btsT by binding to its promoter region. The protein is Transcriptional regulatory protein BtsR of Salmonella typhi.